Here is a 556-residue protein sequence, read N- to C-terminus: Trigger factor (556 aa).

The 87-residue stretch at 169–255 (GDVVVIDFAA…LREIKAKELP (87 aa)) folds into the PPIase FKBP-type domain. Positions 438 to 452 (VDSEGNPTQAPTSLA) are enriched in polar residues. The segment at 438–556 (VDSEGNPTQA…KPSKKDKKGK (119 aa)) is disordered. A compositionally biased stretch (acidic residues) spans 461-472 (PEAEFEADEPEA). Low complexity-rich tracts occupy residues 486 to 503 (ETATGAETDGEAAAAEAE) and 511 to 526 (EASPAETVSASAAEAT).

Belongs to the FKBP-type PPIase family. Tig subfamily.

It is found in the cytoplasm. It carries out the reaction [protein]-peptidylproline (omega=180) = [protein]-peptidylproline (omega=0). Its function is as follows. Involved in protein export. Acts as a chaperone by maintaining the newly synthesized protein in an open conformation. Functions as a peptidyl-prolyl cis-trans isomerase. This Synechococcus sp. (strain JA-2-3B'a(2-13)) (Cyanobacteria bacterium Yellowstone B-Prime) protein is Trigger factor.